Here is a 158-residue protein sequence, read N- to C-terminus: MDKEPITADGLESLKEELIFLKEKKRPQIVAAISEARSHGDLKENAEYHAAKEEQSHNEGRITEINDIIARANVIDVTKMSNDGKVIFGSTVDLENLDTGEKITYKIVGKDEADLQKKLIFFQSPIGRGLIGKNKNDLVEIKTPAGVKNFEIKDVKYV.

It belongs to the GreA/GreB family.

In terms of biological role, necessary for efficient RNA polymerase transcription elongation past template-encoded arresting sites. The arresting sites in DNA have the property of trapping a certain fraction of elongating RNA polymerases that pass through, resulting in locked ternary complexes. Cleavage of the nascent transcript by cleavage factors such as GreA or GreB allows the resumption of elongation from the new 3'terminus. GreA releases sequences of 2 to 3 nucleotides. The protein is Transcription elongation factor GreA of Pelagibacter ubique (strain HTCC1062).